Consider the following 881-residue polypeptide: DNA replication helicase (881 aa).

Residues 1–26 (MAASGGEGSRDVRAPGPPPQQPGARP) are disordered. An ATP-binding site is contributed by 96–103 (GNAGSGKS).

Belongs to the herpesviridae helicase family. As to quaternary structure, associates with the primase and the primase-associated factor to form the helicase-primase complex.

Its subcellular location is the host nucleus. In terms of biological role, component of the helicase/primase complex. Unwinds the DNA at the replication forks and generates single-stranded DNA for both leading and lagging strand synthesis. The primase synthesizes short RNA primers on the lagging strand that the polymerase elongates using dNTPs. Possesses helicase-like motifs and therefore may act as the helicase subunit of the complex. This Human herpesvirus 2 (strain HG52) (HHV-2) protein is DNA replication helicase.